The following is a 910-amino-acid chain: Periodic tryptophan protein 2 homolog (910 aa).

14 WD repeats span residues 12-50 (GTVY…SKTL), 53-92 (DCNY…KIYT), 94-134 (RSNK…KVYN), 144-183 (LSSD…NLFI), 188-227 (SHKG…GELV), 271-310 (GKSV…LVHN), 313-355 (VSEM…YVMK), 358-397 (AHSL…CTVT), 400-439 (EHTS…NFRT), 443-485 (PEPT…DILS), 486-523 (GHES…AETV), 525-563 (VSHE…NLGS), 586-625 (AKTK…ILKK), and 688-728 (RPEV…DPFQ). The tract at residues 867–910 (SKKSVKKEEEEEEDVSDESDDEDIEDESAGSDDEDSDDSVEIIE) is disordered. Acidic residues predominate over residues 875 to 910 (EEEEEDVSDESDDEDIEDESAGSDDEDSDDSVEIIE).

It belongs to the WD repeat PWP2 family.

The protein is Periodic tryptophan protein 2 homolog of Caenorhabditis elegans.